Here is a 132-residue protein sequence, read N- to C-terminus: Phosphoribosyl-AMP cyclohydrolase (132 aa).

Residue Asp-82 coordinates Mg(2+). Position 83 (Cys-83) interacts with Zn(2+). Mg(2+) contacts are provided by Asp-84 and Asp-86. Positions 100 and 107 each coordinate Zn(2+).

This sequence belongs to the PRA-CH family. Homodimer. It depends on Mg(2+) as a cofactor. Zn(2+) is required as a cofactor.

The protein resides in the cytoplasm. It catalyses the reaction 1-(5-phospho-beta-D-ribosyl)-5'-AMP + H2O = 1-(5-phospho-beta-D-ribosyl)-5-[(5-phospho-beta-D-ribosylamino)methylideneamino]imidazole-4-carboxamide. It participates in amino-acid biosynthesis; L-histidine biosynthesis; L-histidine from 5-phospho-alpha-D-ribose 1-diphosphate: step 3/9. Its function is as follows. Catalyzes the hydrolysis of the adenine ring of phosphoribosyl-AMP. The polypeptide is Phosphoribosyl-AMP cyclohydrolase (Dechloromonas aromatica (strain RCB)).